We begin with the raw amino-acid sequence, 130 residues long: Small ribosomal subunit protein uS11c (130 aa).

The protein belongs to the universal ribosomal protein uS11 family. As to quaternary structure, part of the 30S ribosomal subunit.

It localises to the plastid. The sequence is that of Small ribosomal subunit protein uS11c from Aneura mirabilis (Parasitic liverwort).